A 189-amino-acid chain; its full sequence is MLGSTAVMLLLLLPWTAQTRAVSGSSNPSWTQCQQLSQKLCTLAWSAHPSVGHVEPPREEADEETTDYVPHILCGDGCDPQGLKDNSQFCLQRIYQGLVFYQNLLGSDIFTGEPPLFPDGPVSQLHASLLGLSQLLQPEVHQWEPQIPSLSPNQPWQRLLLRIKILRSFQAFVAVAARVFGHGAATLTP.

The signal sequence occupies residues 1 to 19; it reads MLGSTAVMLLLLLPWTAQT.

Belongs to the IL-6 superfamily. In terms of assembly, heterodimer with IL12B; disulfide-linked. The heterodimer is known as interleukin IL-23. Interacts with IL23R; this interaction enables recruitment of IL12RB1.

The protein localises to the secreted. In terms of biological role, associates with IL12B to form the pro-inflammatory cytokine IL-23 that plays different roles in innate and adaptive immunity. Released by antigen-presenting cells such as dendritic cells or macrophages, binds to a heterodimeric receptor complex composed of IL12RB1 and IL23R to activate JAK2 and TYK2 which then phosphorylate the receptor to form a docking site leading to the phosphorylation of STAT3 and STAT4. This process leads to activation of several pathways including p38 MAPK or NF-kappa-B and promotes the production of pro-inflammatory cytokines such as interleukin-17A/IL17A. In turn, participates in the early and effective intracellular bacterial clearance. Promotes the expansion and survival of T-helper 17 cells, a CD4-positive helper T-cell subset that produces IL-17, as well as other IL-17-producing cells. The polypeptide is Interleukin-23 subunit alpha (IL23A) (Cavia porcellus (Guinea pig)).